The primary structure comprises 314 residues: Quinolinate synthase (314 aa).

The iminosuccinate site is built by H27 and S44. Position 89 (C89) interacts with [4Fe-4S] cluster. Iminosuccinate-binding positions include 115 to 117 (YIN) and S132. C175 provides a ligand contact to [4Fe-4S] cluster. Iminosuccinate contacts are provided by residues 201–203 (HPE) and T218. C271 contributes to the [4Fe-4S] cluster binding site.

It belongs to the quinolinate synthase family. Type 2 subfamily. Requires [4Fe-4S] cluster as cofactor.

It localises to the cytoplasm. The catalysed reaction is iminosuccinate + dihydroxyacetone phosphate = quinolinate + phosphate + 2 H2O + H(+). Its pathway is cofactor biosynthesis; NAD(+) biosynthesis; quinolinate from iminoaspartate: step 1/1. In terms of biological role, catalyzes the condensation of iminoaspartate with dihydroxyacetone phosphate to form quinolinate. This Ehrlichia chaffeensis (strain ATCC CRL-10679 / Arkansas) protein is Quinolinate synthase.